The sequence spans 391 residues: Odorant receptor 67d (391 aa).

Over 1–45 (MLKMAKVEPVERYCKVIRMIRFCVGFCGNDVADPNFRMWWLTYAV) the chain is Cytoplasmic. The helical transmembrane segment at 46–66 (MAAIAFFFACTGYTIYVGVVI) threads the bilayer. Residues 67–71 (NGDLT) lie on the Extracellular side of the membrane. The helical transmembrane segment at 72–92 (IILQALAMVGSAVQGLTKLLV) threads the bilayer. At 93-140 (TANNASHMREVQNTYEDIYREYGSKGDEYAKCLEKRIRITWTLLIGFM) the chain is on the cytoplasmic side. The helical transmembrane segment at 141–161 (LVYIILLGLVITFPIFYLLIL) threads the bilayer. Residues 162–164 (HQK) are Extracellular-facing. A helical membrane pass occupies residues 165 to 185 (VLVMQFLIPFLDHTTDGGHLI). Topologically, residues 186–191 (LTAAHV) are cytoplasmic. The helical transmembrane segment at 192–212 (ILITFGGFGNYGGDMYLFLFV) threads the bilayer. The Extracellular portion of the chain corresponds to 213-268 (THVPLIKDIFCVKLTEFNELVMKRNDFPKVRAMLCDLLVWHQLYTRMLQTTKKIYS). The chain crosses the membrane as a helical span at residues 269–289 (IVLFVQLSTTCVGLLCTISCI). At 290–297 (FMKAWPAA) the chain is on the cytoplasmic side. A helical transmembrane segment spans residues 298 to 318 (PLYLLYAAITLYTFCGLGTLV). Residues 319 to 391 (ENSNEDFLSV…FSMMLMNYLG (73 aa)) lie on the Extracellular side of the membrane.

This sequence belongs to the insect chemoreceptor superfamily. Heteromeric odorant receptor channel (TC 1.A.69) family. Or67d subfamily. In terms of assembly, interacts with Orco. Complexes exist early in the endomembrane system in olfactory sensory neurons (OSNs), coupling these complexes to the conserved ciliary trafficking pathway. In terms of tissue distribution, expressed in antenna.

The protein localises to the cell membrane. Functionally, plays a role in detection and sensitivity to pheromones and signal transduction of the fatty-acid-derived male pheromone 11-cis vaccenyl acetate (cVA). Acts in concert with Snmp and lush to capture cVA molecules on the surface of Or67d expressing olfactory dendrites and facilitate their transfer to the odorant-receptor Orco complex. Necessary to mediate behavioral responses to cVA by regulating both male and female mating behavior. Activation of Or67d neurons by cVA inhibits courtship of other males, whereas in females their activation promotes receptivity to other males. May form a complex with Orco to form odorant-sensing units, providing sensitive and prolonged odorant signaling and calcium permeability. This Drosophila melanogaster (Fruit fly) protein is Odorant receptor 67d (Or67d).